The following is a 951-amino-acid chain: Leucine-rich repeat-containing G-protein coupled receptor 4 (951 aa).

A signal peptide spans 1–19 (MPGPLGLLCFLALGLRGSA). The Extracellular segment spans residues 20 to 544 (EPSGAAPPLC…LLGSWMIRLT (525 aa)). One can recognise an LRRNT domain in the interval 25-57 (APPLCAAPCSCDGDRRVDCSGKGLTAVPEGLSA). 2 disulfides stabilise this stretch: cysteine 29–cysteine 35 and cysteine 33–cysteine 43. LRR repeat units lie at residues 35-58 (CDGD…LSAF), 59-79 (TQLL…AFKN), 81-103 (PFLE…ALSG), 104-127 (LKEL…AIRG), 128-151 (LSSL…SFEG), 153-175 (TQLR…PLSN), 176-199 (LPTL…AFTN), 201-223 (SSLV…CFDG), 224-247 (LDNL…IKAL), 248-270 (PSLK…AFDG), and 272-294 (PLLK…AFHN). The N-linked (GlcNAc...) asparagine glycan is linked to asparagine 68. A glycan (N-linked (GlcNAc...) asparagine) is linked at asparagine 199. Asparagine 294 and asparagine 314 each carry an N-linked (GlcNAc...) asparagine glycan. LRR repeat units follow at residues 318–341 (TVRL…LCQE), 342–363 (QKRL…SFNG), 364–387 (CHAL…TFQG), 388–411 (LTSL…AFAK), and 413–435 (GSIT…GLNG). Residues cysteine 339 and cysteine 364 are joined by a disulfide bond. 2 disulfide bridges follow: cysteine 470–cysteine 522 and cysteine 471–cysteine 476. Residues 545-565 (VWFIFLVALFFNLLVILTTFA) form a helical membrane-spanning segment. Residues 566–575 (SCTSVPSSKL) are Cytoplasmic-facing. The helical transmembrane segment at 576–596 (FIGLISVSNLFMGAYTGILTF) threads the bilayer. Topologically, residues 597–619 (LDAVSWGRFAEFGIWWEIGSGCK) are extracellular. Cysteines 618 and 693 form a disulfide. Residues 620–640 (IAGFLAVFSSESAIFLLMLAA) traverse the membrane as a helical segment. Residues 641–661 (VERSLSAKDMMKNGKSNHLRQ) are Cytoplasmic-facing. The helical transmembrane segment at 662-682 (FRIAALLAFLGAAVAGSFPLF) threads the bilayer. Residues 683 to 703 (HRGEYSASPLCLPFPTGETPS) lie on the Extracellular side of the membrane. Residues 704–724 (LGFTVTLVLLNSLAFLLMAII) form a helical membrane-spanning segment. Over 725–756 (YTKLYCNLEKEDLSESSQSSMIKHVAWLIFTN) the chain is Cytoplasmic. The helical transmembrane segment at 757 to 777 (CIFFCPVAFFSFAPLITAVSI) threads the bilayer. Over 778–783 (SPEIMK) the chain is Extracellular. A helical membrane pass occupies residues 784 to 804 (SVTLIFFPLPACLNPVLYVFF). The Cytoplasmic segment spans residues 805–951 (NPKFKEDWKL…YAYNLPRVKD (147 aa)). Serine 920 carries the post-translational modification Phosphoserine.

This sequence belongs to the G-protein coupled receptor 1 family.

It is found in the cell membrane. Functionally, receptor for R-spondins that potentiates the canonical Wnt signaling pathway and is involved in the formation of various organs. Upon binding to R-spondins (RSPO1, RSPO2, RSPO3 or RSPO4), associates with phosphorylated LRP6 and frizzled receptors that are activated by extracellular Wnt receptors, triggering the canonical Wnt signaling pathway to increase expression of target genes. In contrast to classical G-protein coupled receptors, does not activate heterotrimeric G-proteins to transduce the signal. Its function as activator of the Wnt signaling pathway is required for the development of various organs, including liver, kidney, intestine, bone, reproductive tract and eye. May also act as a receptor for norrin (NDP), such results however required additional confirmation in vivo. Required during spermatogenesis to activate the Wnt signaling pathway in peritubular myoid cells. Required for the maintenance of intestinal stem cells and Paneth cell differentiation in postnatal intestinal crypts. Acts as a regulator of bone formation and remodeling. Involved in kidney development; required for maintaining the ureteric bud in an undifferentiated state. Involved in the development of the anterior segment of the eye. Required during erythropoiesis. Also acts as a negative regulator of innate immunity by inhibiting TLR2/TLR4 associated pattern-recognition and pro-inflammatory cytokine production. Plays an important role in regulating the circadian rhythms of plasma lipids, partially through regulating the rhythmic expression of MTTP. Required for proper development of GnRH neurons (gonadotropin-releasing hormone expressing neurons) that control the release of reproductive hormones from the pituitary gland. This Bos taurus (Bovine) protein is Leucine-rich repeat-containing G-protein coupled receptor 4 (LGR4).